Here is a 96-residue protein sequence, read N- to C-terminus: Small ribosomal subunit protein bS6 (96 aa).

This sequence belongs to the bacterial ribosomal protein bS6 family.

Functionally, binds together with bS18 to 16S ribosomal RNA. The sequence is that of Small ribosomal subunit protein bS6 from Beutenbergia cavernae (strain ATCC BAA-8 / DSM 12333 / CCUG 43141 / JCM 11478 / NBRC 16432 / NCIMB 13614 / HKI 0122).